Reading from the N-terminus, the 443-residue chain is Phosphoglucosamine mutase (443 aa).

The active-site Phosphoserine intermediate is serine 102. Residues serine 102, aspartate 241, aspartate 243, and aspartate 245 each contribute to the Mg(2+) site. At serine 102 the chain carries Phosphoserine.

This sequence belongs to the phosphohexose mutase family. The cofactor is Mg(2+). Post-translationally, activated by phosphorylation.

The catalysed reaction is alpha-D-glucosamine 1-phosphate = D-glucosamine 6-phosphate. Catalyzes the conversion of glucosamine-6-phosphate to glucosamine-1-phosphate. This is Phosphoglucosamine mutase from Acinetobacter baylyi (strain ATCC 33305 / BD413 / ADP1).